An 859-amino-acid polypeptide reads, in one-letter code: Photoactivated adenylate cyclase subunit beta (859 aa).

One can recognise a BLUF 1 domain in the interval 56 to 149; that stretch reads LRRLMYLSKS…GRMYGDWHMK (94 aa). The Guanylate cyclase 1 domain occupies 205–333; it reads VVTFIYLVEF…DCINTTSRIA (129 aa). Residues 420–443 form a disordered region; it reads RPPIFDDTPKGNPRPRTPGYGGRQ. Positions 471–563 constitute a BLUF 2 domain; it reads LTTLTYISQA…RVYPSEWTLT (93 aa). In terms of domain architecture, Guanylate cyclase 2 spans 619-748; that stretch reads VMLATDICSF…AVSARVMEVE (130 aa). The tract at residues 813–859 is disordered; that stretch reads AARSGEKPLTEPEEAKPDFRVSPGRVRHGDSGRRSNSAQGKRSIQVR. Residues 815–831 are compositionally biased toward basic and acidic residues; that stretch reads RSGEKPLTEPEEAKPDF. Positions 846-859 are enriched in polar residues; sequence RSNSAQGKRSIQVR.

The protein belongs to the adenylyl cyclase class-4/guanylyl cyclase family. Heterotetramer of two alpha and two beta subunits. It depends on FAD as a cofactor.

It is found in the cell projection. It localises to the cilium. The protein resides in the flagellum. The catalysed reaction is ATP = 3',5'-cyclic AMP + diphosphate. Activity increased by up to 80-fold under blue light. In terms of biological role, acts as a blue light photoreceptor for the step-up photophobic response. Mediates photoavoidance. The sequence is that of Photoactivated adenylate cyclase subunit beta from Euglena gracilis.